The sequence spans 419 residues: Lipoyl synthase, mitochondrial (419 aa).

Residues 1 to 26 constitute a mitochondrion transit peptide; that stretch reads MAVCAGRLKCFGNPAVSLRTAASRAY. Positions 28–47 are enriched in low complexity; that stretch reads TTTSPDPAIPSSSSASSSSA. Positions 28 to 61 are disordered; the sequence is TTTSPDPAIPSSSSASSSSALPKRPQTSFRDKLN. Residues cysteine 136, cysteine 141, cysteine 147, cysteine 167, cysteine 171, cysteine 174, and serine 382 each coordinate [4Fe-4S] cluster. Residues 150 to 371 enclose the Radical SAM core domain; sequence GSSKSAATAT…KDRALEMGFL (222 aa). Residues 399-419 are disordered; that stretch reads AESTGPESTNVPNVTPDAIVR.

It belongs to the radical SAM superfamily. Lipoyl synthase family. Requires [4Fe-4S] cluster as cofactor.

The protein resides in the mitochondrion. It catalyses the reaction [[Fe-S] cluster scaffold protein carrying a second [4Fe-4S](2+) cluster] + N(6)-octanoyl-L-lysyl-[protein] + 2 oxidized [2Fe-2S]-[ferredoxin] + 2 S-adenosyl-L-methionine + 4 H(+) = [[Fe-S] cluster scaffold protein] + N(6)-[(R)-dihydrolipoyl]-L-lysyl-[protein] + 4 Fe(3+) + 2 hydrogen sulfide + 2 5'-deoxyadenosine + 2 L-methionine + 2 reduced [2Fe-2S]-[ferredoxin]. Its pathway is protein modification; protein lipoylation via endogenous pathway; protein N(6)-(lipoyl)lysine from octanoyl-[acyl-carrier-protein]: step 2/2. Its function is as follows. Catalyzes the radical-mediated insertion of two sulfur atoms into the C-6 and C-8 positions of the octanoyl moiety bound to the lipoyl domains of lipoate-dependent enzymes, thereby converting the octanoylated domains into lipoylated derivatives. This is Lipoyl synthase, mitochondrial from Coccidioides posadasii (strain C735) (Valley fever fungus).